The sequence spans 495 residues: Glycerol kinase (495 aa).

Thr11 provides a ligand contact to ADP. Positions 11, 12, and 13 each coordinate ATP. Sn-glycerol 3-phosphate is bound at residue Thr11. An ADP-binding site is contributed by Arg15. Sn-glycerol 3-phosphate-binding residues include Arg81, Glu82, Tyr133, and Asp242. Residues Arg81, Glu82, Tyr133, Asp242, and Gln243 each coordinate glycerol. ADP is bound by residues Thr264 and Gly307. Residues Thr264, Gly307, Gln311, and Gly408 each contribute to the ATP site. 2 residues coordinate ADP: Gly408 and Asn412.

This sequence belongs to the FGGY kinase family.

It catalyses the reaction glycerol + ATP = sn-glycerol 3-phosphate + ADP + H(+). It participates in polyol metabolism; glycerol degradation via glycerol kinase pathway; sn-glycerol 3-phosphate from glycerol: step 1/1. Its activity is regulated as follows. Inhibited by fructose 1,6-bisphosphate (FBP). Functionally, key enzyme in the regulation of glycerol uptake and metabolism. Catalyzes the phosphorylation of glycerol to yield sn-glycerol 3-phosphate. This is Glycerol kinase from Citrifermentans bemidjiense (strain ATCC BAA-1014 / DSM 16622 / JCM 12645 / Bem) (Geobacter bemidjiensis).